Consider the following 30-residue polypeptide: Brevinin-2Rj (30 aa).

A disulfide bridge links C24 with C30.

In terms of tissue distribution, expressed by the skin glands.

The protein resides in the secreted. Functionally, antimicrobial peptide. This chain is Brevinin-2Rj, found in Pelophylax ridibundus (Marsh frog).